The sequence spans 638 residues: MFAELNAKDQFNELLKHLSSTSCTTMQADRVETSSSVRKKKWMSRRRGACDMCKSKKVRCDGGTPCSYCNLHDLRCEYQLSKKQQTNKPPVASAAEDVSIVPSYAENNGSGVTTQVPSPSDVQVLPELTANRGSGNAGNILQDMMLATNDRHSMPVMFDGYAHDNFSASPIEWVGSDSLAAPFSVDMGNLNALGTLPWSPPKTAYSEPNLDIPYPIEHTTDVSASLPSISQFELNLPLSPAGPTRDMYDEKMWEEVSPKRQRLGNLSPTQQDEVEAIFRRLSDAQSQMSFGLGGEQYDSHSRWYWSDTALMEKCKSACFEEPLGISTFLTRSHFDDYVQQARESPSIQGLAVRPLIDSVMAFGFHILAARSQPSAGSDVSRKAITRLRMALSSRDAVQRSPDTLLKLQMTISEQIDHKIHTELLSYAVSCARSRRFLHRDSVYMTMTKEKEYLARRSMWYLYSMEVVHSIRDGMPPILTPDWTDYALPEVGKDTDTDWLLIQCQHANALSSAVNALYSPRALCQTVAERERNMMQAHKLLENWRTSLPVHLQNIHRHETGYVALDDQKTRHLTLTMVGKYHEAIFIIFFPWTGSQSKGLISEHYRKRSMELCVKSAQAVLAIAARITSCDILGGSLAS.

Residues 50–76 (CDMCKSKKVRCDGGTPCSYCNLHDLRC) constitute a DNA-binding region (zn(2)-C6 fungal-type).

It localises to the nucleus. Transcription factor that regulates specifically the terrein biosynthesis gene cluster. Recognizes CGG direct repeat consensus sequences in the terrein cluster forming the high affinity consensus motif TCGGHHWYHCGGH. This chain is Terrein cluster-specific transcription factor terR, found in Aspergillus terreus (strain NIH 2624 / FGSC A1156).